Here is a 60-residue protein sequence, read N- to C-terminus: Large ribosomal subunit protein bL32 (60 aa).

This sequence belongs to the bacterial ribosomal protein bL32 family.

This chain is Large ribosomal subunit protein bL32, found in Borreliella afzelii (strain PKo) (Borrelia afzelii).